The following is a 244-amino-acid chain: ATP synthase subunit a (244 aa).

6 helical membrane passes run 25-45 (ISFT…LLIF), 85-105 (YFAF…FGMI), 115-135 (IIVT…IGFM), 144-164 (LFVP…IEII), 193-213 (GFVI…SVAL), and 216-236 (LEIL…CIYL).

Belongs to the ATPase A chain family. As to quaternary structure, F-type ATPases have 2 components, CF(1) - the catalytic core - and CF(0) - the membrane proton channel. CF(1) has five subunits: alpha(3), beta(3), gamma(1), delta(1), epsilon(1). CF(0) has three main subunits: a(1), b(2) and c(9-12). The alpha and beta chains form an alternating ring which encloses part of the gamma chain. CF(1) is attached to CF(0) by a central stalk formed by the gamma and epsilon chains, while a peripheral stalk is formed by the delta and b chains.

It is found in the cell inner membrane. Key component of the proton channel; it plays a direct role in the translocation of protons across the membrane. This is ATP synthase subunit a from Pelagibacter ubique (strain HTCC1062).